A 105-amino-acid polypeptide reads, in one-letter code: Ig lambda chain C region (105 aa).

An Ig-like domain is found at proline 2–threonine 100. Cysteine 27 and cysteine 86 are oxidised to a cystine.

In Sus scrofa (Pig), this protein is Ig lambda chain C region.